The primary structure comprises 389 residues: E3 ubiquitin-protein ligase E3D (389 aa).

A2 carries the post-translational modification N-acetylalanine. A BRAT1-like motif motif is present at residues 129–159 (PLPGDNWGALVDEWCCHPDPFANKPLHPREN). C144 provides a ligand contact to Zn(2+). Residues 235–257 (LPSERNFPIIPRSQFVQSVLAQC) are interaction with UBE2C. Residues 353–389 (LPSTTCLELLLILSKSNATLPPSLRCMNSFQVAFLKM) are HECT-like.

In terms of assembly, interacts with UBE2C/UbcH10 (E2 ubiquitin-conjugating enzyme). In vitro, interacts with cyclin-B. Post-translationally, ubiquitinated by UBCH10 (E2 ubiquitin-conjugating enzyme).

The protein localises to the cytoplasm. It carries out the reaction S-ubiquitinyl-[E2 ubiquitin-conjugating enzyme]-L-cysteine + [acceptor protein]-L-lysine = [E2 ubiquitin-conjugating enzyme]-L-cysteine + N(6)-ubiquitinyl-[acceptor protein]-L-lysine.. Its pathway is protein modification; protein ubiquitination. E3 ubiquitin-protein ligase which accepts ubiquitin from specific E2 ubiquitin-conjugating enzymes, and transfers it to substrates, generally promoting their degradation by the proteasome. Independently of its E3 ubiquitin-protein ligase activity, acts as an inhibitor of CPSF3 endonuclease activity by blocking CPSF3 active site. The polypeptide is E3 ubiquitin-protein ligase E3D (UBE3D) (Bos taurus (Bovine)).